The chain runs to 1216 residues: Apical endosomal glycoprotein (1216 aa).

The first 21 residues, 1–21 (MCLPSCLLSIWVLFMAAQSLG), serve as a signal peptide directing secretion. The Extracellular segment spans residues 22–1155 (KTWVPDHCRS…SQGRVAAPVS (1134 aa)). Positions 27 to 54 (DHCRSPTEATCNFVCDCGDCSDEAQCGF) constitute an LDL-receptor class A 1; truncated domain. In terms of domain architecture, MAM 1 spans 62–224 (NTPFTCNFEQ…DDMEFWDCGL (163 aa)). N205 carries N-linked (GlcNAc...) asparagine glycosylation. The LDL-receptor class A 2 domain maps to 229-269 (ARCPLGHHHCQNKACVEPHQLCDGEDNCGDSSDEDPLICSH). Intrachain disulfides connect C231–C243, C238–C256, and C250–C267. Residues 268-427 (SHHMATDFET…DLIMSNHCIL (160 aa)) form the MAM 2 domain. N291, N341, and N368 each carry an N-linked (GlcNAc...) asparagine glycan. The 38-residue stretch at 454–491 (RTCDAGHLSCDELCVPPEQLCDFQQHCAEGEDEEKCGT) folds into the LDL-receptor class A 3 domain. 3 disulfides stabilise this stretch: C456–C467, C463–C480, and C474–C489. MAM domains lie at 492–647 (TDFE…DCNP), 654–813 (DQEV…PCWA), 812–973 (WAAK…PCAQ), and 972–1142 (AQPG…HCKQ). A glycan (N-linked (GlcNAc...) asparagine) is linked at N639. N839 carries N-linked (GlcNAc...) asparagine glycosylation. A helical transmembrane segment spans residues 1156-1176 (VPVAVGGALLLFLLLLGLGGW). At 1177–1216 (HWLQKQHLPCQSTDAAASGFDNILFNADQVTLPESITSNP) the chain is on the cytoplasmic side.

As to expression, apical endosomal tubules of developing rat intestinal epithelial cells.

It is found in the membrane. Probably involved in the sorting and selective transport of receptors and ligands across polarized epithelia. This is Apical endosomal glycoprotein (Mamdc4) from Rattus norvegicus (Rat).